The chain runs to 213 residues: Lysozyme g-like protein 2 (213 aa).

A signal peptide spans 1–19; the sequence is MVPSVVFWGLIALVGTAKG. 2 disulfides stabilise this stretch: Cys-40–Cys-93 and Cys-54–Cys-62. Glu-106 is a catalytic residue.

The protein belongs to the glycosyl hydrolase 23 family.

It localises to the secreted. In terms of biological role, may act as a potent antibacterial protein that may play a role in the innate immunity. The chain is Lysozyme g-like protein 2 (Lyg2) from Mus musculus (Mouse).